Here is a 361-residue protein sequence, read N- to C-terminus: (S)-coclaurine N-methyltransferase (361 aa).

Residues Ser101, Gly139, Asn163, Gln167, Asp189, Ile190, and Val205 each contribute to the S-adenosyl-L-methionine site. Cys336 is an active-site residue.

Belongs to the CFA/CMAS family. In terms of assembly, homodimer. In terms of tissue distribution, highly expressed in rhizomes. Detected in roots, petioles, flower buds and leaves. Expressed between the developing stele and ground tissues near the root apical meristem, in the immature endodermis, the pericycle and the spokes of developing xylem in the apical region of the root and in the protoderm of leaf primordia in rhizomes.

The protein resides in the cytoplasm. It carries out the reaction norreticuline + S-adenosyl-L-methionine = reticuline + S-adenosyl-L-homocysteine + H(+). The enzyme catalyses (S)-coclaurine + S-adenosyl-L-methionine = (S)-N-methylcoclaurine + S-adenosyl-L-homocysteine + H(+). The catalysed reaction is heliamine + S-adenosyl-L-methionine = N-methylheliamine + S-adenosyl-L-homocysteine + H(+). Its pathway is alkaloid biosynthesis. Functionally, involved in the biosynthesis of protoberberine alkaloids. N-methyltransferase with a substrate preference for (R,S)-norreticuline but also active with dimethoxytetrahydroisoquinoline. This is (S)-coclaurine N-methyltransferase from Thalictrum flavum subsp. glaucum (Yellow meadow rue).